We begin with the raw amino-acid sequence, 66 residues long: Potassium channel toxin alpha-KTx 30.1 (66 aa).

An N-terminal signal peptide occupies residues 1–24; sequence MNTGFFFFVIMATGLVLTFDTIHA. 3 disulfide bridges follow: Cys30-Cys50, Cys36-Cys55, and Cys40-Cys57.

It belongs to the short scorpion toxin superfamily. Potassium channel inhibitor family. Alpha-KTx 30 subfamily. Expressed by the venom gland.

Its subcellular location is the secreted. Its function is as follows. inhibits Kv1.3/KCNA3 channel (1 uM of the toxin inhibits currents by 64.1%). This is Potassium channel toxin alpha-KTx 30.1 from Scorpiops margerisonae (Scorpion).